Reading from the N-terminus, the 76-residue chain is Large ribosomal subunit protein eL20 (76 aa).

Belongs to the eukaryotic ribosomal protein eL20 family. As to quaternary structure, part of the 50S ribosomal subunit. Binds 23S rRNA.

The sequence is that of Large ribosomal subunit protein eL20 from Methanococcus maripaludis (strain C6 / ATCC BAA-1332).